Consider the following 289-residue polypeptide: Glycine--tRNA ligase alpha subunit (289 aa).

It belongs to the class-II aminoacyl-tRNA synthetase family. Tetramer of two alpha and two beta subunits.

It is found in the cytoplasm. It catalyses the reaction tRNA(Gly) + glycine + ATP = glycyl-tRNA(Gly) + AMP + diphosphate. This chain is Glycine--tRNA ligase alpha subunit, found in Rickettsia felis (strain ATCC VR-1525 / URRWXCal2) (Rickettsia azadi).